Reading from the N-terminus, the 427-residue chain is Diaminobutyrate--2-oxoglutarate transaminase (427 aa).

N6-(pyridoxal phosphate)lysine is present on lysine 269.

This sequence belongs to the class-III pyridoxal-phosphate-dependent aminotransferase family. Requires pyridoxal 5'-phosphate as cofactor.

The catalysed reaction is L-2,4-diaminobutanoate + 2-oxoglutarate = L-aspartate 4-semialdehyde + L-glutamate. It functions in the pathway amine and polyamine biosynthesis; ectoine biosynthesis; L-ectoine from L-aspartate 4-semialdehyde: step 1/3. Functionally, catalyzes reversively the conversion of L-aspartate beta-semialdehyde (ASA) to L-2,4-diaminobutyrate (DABA) by transamination with L-glutamate. This Marinococcus halophilus protein is Diaminobutyrate--2-oxoglutarate transaminase (ectB).